Consider the following 180-residue polypeptide: Acireductone dioxygenase 1 (180 aa).

Residues H82, H84, E88, and H127 each coordinate Fe(2+). Ni(2+) is bound by residues H82, H84, E88, and H127.

The protein belongs to the acireductone dioxygenase (ARD) family. Requires Fe(2+) as cofactor. Ni(2+) serves as cofactor.

The protein localises to the cytoplasm. It localises to the nucleus. It carries out the reaction 1,2-dihydroxy-5-(methylsulfanyl)pent-1-en-3-one + O2 = 4-methylsulfanyl-2-oxobutanoate + formate + 2 H(+). It catalyses the reaction 1,2-dihydroxy-5-(methylsulfanyl)pent-1-en-3-one + O2 = 3-(methylsulfanyl)propanoate + CO + formate + 2 H(+). It participates in amino-acid biosynthesis; L-methionine biosynthesis via salvage pathway; L-methionine from S-methyl-5-thio-alpha-D-ribose 1-phosphate: step 5/6. Its function is as follows. Catalyzes 2 different reactions between oxygen and the acireductone 1,2-dihydroxy-3-keto-5-methylthiopentene (DHK-MTPene) depending upon the metal bound in the active site. Fe-containing acireductone dioxygenase (Fe-ARD) produces formate and 2-keto-4-methylthiobutyrate (KMTB), the alpha-ketoacid precursor of methionine in the methionine recycle pathway. Ni-containing acireductone dioxygenase (Ni-ARD) produces methylthiopropionate, carbon monoxide and formate, and does not lie on the methionine recycle pathway. The chain is Acireductone dioxygenase 1 from Sorghum bicolor (Sorghum).